An 823-amino-acid chain; its full sequence is Protein FAM83G (823 aa).

A2 is subject to N-acetylalanine. Residues A2 to L312 are DUF1669. Phosphoserine is present on S4. The disordered stretch occupies residues D75–P108. Residues S124, S127, and S356 each carry the phosphoserine modification. Residues R450–P823 are disordered. A compositionally biased stretch (polar residues) spans T452–S465. Residues D497–R508 show a composition bias toward pro residues. A compositionally biased stretch (basic and acidic residues) spans L529 to L543. Acidic residues predominate over residues G578–Y587. S610, S614, S616, S650, and S666 each carry phosphoserine. Composition is skewed to basic and acidic residues over residues R672–K681 and D809–P823.

It belongs to the FAM83 family. As to quaternary structure, interacts with SMAD1 (via MH2 domain); in a SMAD4-independent manner. Directly interacts (via DUF1669) with casein kinase isoforms CSNK1A1 and CSNK1A1L. Post-translationally, phosphorylated in vitro by CSNK1A1. In terms of processing, BMP signaling induces the phosphorylation by BMPR1A at Ser-610, Ser-614 and Ser-616. Phosphorylation at Ser-610 is necessary for the activation of SMAD4-independent BMP target genes such as NEDD9 and ASNS.

It localises to the cytoplasm. The protein resides in the cytosol. Its subcellular location is the nucleus. Substrate for type I BMP receptor kinase involved in regulation of some target genes of the BMP signaling pathway. Also regulates the expression of several non-BMP target genes, suggesting a role in other signaling pathways. The protein is Protein FAM83G (FAM83G) of Homo sapiens (Human).